Consider the following 155-residue polypeptide: Small ribosomal subunit protein uS7 (155 aa).

This sequence belongs to the universal ribosomal protein uS7 family. In terms of assembly, part of the 30S ribosomal subunit. Contacts proteins S9 and S11.

Functionally, one of the primary rRNA binding proteins, it binds directly to 16S rRNA where it nucleates assembly of the head domain of the 30S subunit. Is located at the subunit interface close to the decoding center, probably blocks exit of the E-site tRNA. The polypeptide is Small ribosomal subunit protein uS7 (Xanthomonas axonopodis pv. citri (strain 306)).